Consider the following 156-residue polypeptide: Endoribonuclease YbeY (156 aa).

Zn(2+) contacts are provided by histidine 122, histidine 126, and histidine 132.

This sequence belongs to the endoribonuclease YbeY family. Zn(2+) is required as a cofactor.

Its subcellular location is the cytoplasm. Its function is as follows. Single strand-specific metallo-endoribonuclease involved in late-stage 70S ribosome quality control and in maturation of the 3' terminus of the 16S rRNA. The protein is Endoribonuclease YbeY of Bacillus cereus (strain B4264).